A 98-amino-acid polypeptide reads, in one-letter code: DNA-binding protein HU (98 aa).

This sequence belongs to the bacterial histone-like protein family. As to quaternary structure, homodimer.

In terms of biological role, histone-like DNA-binding protein which is capable of wrapping DNA to stabilize it, and thus to prevent its denaturation under extreme environmental conditions. This is DNA-binding protein HU (hup) from Campylobacter jejuni subsp. jejuni serotype O:2 (strain ATCC 700819 / NCTC 11168).